Here is a 306-residue protein sequence, read N- to C-terminus: Non-specific ribonucleoside hydrolase RihC (306 aa).

H235 is a catalytic residue.

The protein belongs to the IUNH family. RihC subfamily.

Hydrolyzes both purine and pyrimidine ribonucleosides with a broad-substrate specificity. The polypeptide is Non-specific ribonucleoside hydrolase RihC (Salmonella agona (strain SL483)).